We begin with the raw amino-acid sequence, 446 residues long: MSSMTPQEIVSELDRHIVGQNGAKRAVAIALRNRWRRQQVDASLRHEITPKNILMIGPTGVGKTEIARRLARLADAPFIKVEATKFTEVGYVGKDVDSIVRDLVEVAVKQTREADMKKVRVRAEDAAEDRILDVLIPPARGASVDTARTGDPAGDSTARQVFRKKLREGQLDDKEIEIDLADARPQFEIMSPAGMEEMTEQLRGMFSQMGQERRRARKLKIAEAMKLLVEEEAAKLVNEEEVKTRALANAEQNGIVFIDEIDKVASRQEAGGADVSRQGVQRDLLPLVEGTTVSTKYGMVKTDHILFIASGAFHLAKPSDLIPELQGRFPIRVELTSLSVQDFEAILTQTHASLVKQYQALLETEGVTLDFTPEGITRLAHIAFEVNERTENIGARRLSTVMERLLDEVSYDATRLSGQTVVVDAGYVNARLQSLSQDEDLSRYIL.

Residues V18, 60–65 (GVGKTE), D259, E324, and R396 each bind ATP.

This sequence belongs to the ClpX chaperone family. HslU subfamily. A double ring-shaped homohexamer of HslV is capped on each side by a ring-shaped HslU homohexamer. The assembly of the HslU/HslV complex is dependent on binding of ATP.

The protein localises to the cytoplasm. In terms of biological role, ATPase subunit of a proteasome-like degradation complex; this subunit has chaperone activity. The binding of ATP and its subsequent hydrolysis by HslU are essential for unfolding of protein substrates subsequently hydrolyzed by HslV. HslU recognizes the N-terminal part of its protein substrates and unfolds these before they are guided to HslV for hydrolysis. In Acidovorax ebreus (strain TPSY) (Diaphorobacter sp. (strain TPSY)), this protein is ATP-dependent protease ATPase subunit HslU.